The following is a 299-amino-acid chain: Fluorinase (299 aa).

S-adenosyl-L-methionine is bound by residues D15, D20 to S22, Y76, S157, D210, N215, S269 to R270, and R277 to A279.

It belongs to the SAM hydrolase / SAM-dependent halogenase family.

It catalyses the reaction fluoride + S-adenosyl-L-methionine = 5'-deoxy-5'-fluoroadenosine + L-methionine. Activity is not severely affected by most metal ions (Mg(2+), Mn(2+), Co(2+) and Fe(2+)), but both Cu(2+) and Zn(2+) are strong inhibitors. In terms of biological role, catalyzes the formation of a C-F bond by combining S-adenosyl-L-methionine (SAM) and fluoride to generate 5'-fluoro-5'-deoxyadenosine (5'-FDA) and L-methionine. In Actinopolyspora mzabensis, this protein is Fluorinase.